The sequence spans 859 residues: Active breakpoint cluster region-related protein (859 aa).

Positions 26–84 (TDEYDGEGNEEQKGPPEGSETMPYIDESPTMSPQLSARSQGGGDGVSPTPPEGLAPGVE) are disordered. Polar residues predominate over residues 54–64 (PTMSPQLSARS). The residue at position 57 (S57) is a Phosphoserine. The DH domain occupies 91–284 (MRKLVLSGFL…QNFLSSINED (194 aa)). The PH domain maps to 301–459 (QLVKDGFLVE…WREAIQKLQK (159 aa)). The region spanning 484-613 (TVHNIPVTSN…ETKNWHTDVI (130 aa)) is the C2 domain. The 199-residue stretch at 647–845 (VKISVVTKRE…YYLQHPPISF (199 aa)) folds into the Rho-GAP domain.

In terms of assembly, interacts with DLG4. In terms of tissue distribution, highly enriched in the brain. Much weaker expression in heart, lung and muscle.

The protein localises to the cell projection. The protein resides in the dendritic spine. Its subcellular location is the axon. It is found in the synapse. Protein with a unique structure having two opposing regulatory activities toward small GTP-binding proteins. The C-terminus is a GTPase-activating protein domain which stimulates GTP hydrolysis by RAC1, RAC2 and CDC42. Accelerates the intrinsic rate of GTP hydrolysis of RAC1 or CDC42, leading to down-regulation of the active GTP-bound form. The central Dbl homology (DH) domain functions as a guanine nucleotide exchange factor (GEF) that modulates the GTPases CDC42, RHOA and RAC1. Promotes the conversion of CDC42, RHOA and RAC1 from the GDP-bound to the GTP-bound form. Functions as an important negative regulator of neuronal RAC1 activity. Regulates macrophage functions such as CSF-1 directed motility and phagocytosis through the modulation of RAC1 activity. The sequence is that of Active breakpoint cluster region-related protein from Homo sapiens (Human).